The primary structure comprises 233 residues: MRMSCNGCRVLRKGCSENCSIRPCLQWIKSAESQANATVFLAKFYGRAGLMNLLNTGPDHLRPAIFRSLLYEACGRIVNPIYGSVGLLWSGNWHLCQAAVEAVMRGSPVTPIACDAAVTGQAPPFNNKLCDIRHVSSRDENVKRRSRGACKEERNVRSLSHESSLSHESPVSSEETTTEEPKTWIGLELTLGLEPLARGNHVVVPMKKRKLERCGTSEDEDTCKIELGLVCSE.

Residues 3–109 (MSCNGCRVLR…VEAVMRGSPV (107 aa)) enclose the LOB domain. Over residues 143–160 (KRRSRGACKEERNVRSLS) the composition is skewed to basic and acidic residues. Residues 143 to 183 (KRRSRGACKEERNVRSLSHESSLSHESPVSSEETTTEEPKT) form a disordered region. Residues 161–175 (HESSLSHESPVSSEE) show a composition bias toward low complexity.

Belongs to the LOB domain-containing protein family. Expressed in roots and flowers.

The protein is LOB domain-containing protein 40 (LBD40) of Arabidopsis thaliana (Mouse-ear cress).